Here is a 688-residue protein sequence, read N- to C-terminus: UvrABC system protein B (688 aa).

The 158-residue stretch at 31 to 188 (GRVNAGEPDV…RKFVSMQYQR (158 aa)) folds into the Helicase ATP-binding domain. An ATP-binding site is contributed by 44 to 51 (GATGTGKS). The Beta-hairpin signature appears at 97–120 (YYDYYQPEAYVPQTDTFIEKDSSV). Residues 434–587 (QIDDLLEQIR…QVAYNTEHGI (154 aa)) form the Helicase C-terminal domain. A disordered region spans residues 607-632 (GEDTKKMLEGRGGGKRSPTPNLRREG). The 36-residue stretch at 642–677 (ETIISDLNDQMLQAAGELKFELAARLRDELGDLKRE) folds into the UVR domain.

This sequence belongs to the UvrB family. As to quaternary structure, forms a heterotetramer with UvrA during the search for lesions. Interacts with UvrC in an incision complex.

The protein resides in the cytoplasm. In terms of biological role, the UvrABC repair system catalyzes the recognition and processing of DNA lesions. A damage recognition complex composed of 2 UvrA and 2 UvrB subunits scans DNA for abnormalities. Upon binding of the UvrA(2)B(2) complex to a putative damaged site, the DNA wraps around one UvrB monomer. DNA wrap is dependent on ATP binding by UvrB and probably causes local melting of the DNA helix, facilitating insertion of UvrB beta-hairpin between the DNA strands. Then UvrB probes one DNA strand for the presence of a lesion. If a lesion is found the UvrA subunits dissociate and the UvrB-DNA preincision complex is formed. This complex is subsequently bound by UvrC and the second UvrB is released. If no lesion is found, the DNA wraps around the other UvrB subunit that will check the other stand for damage. This Clavibacter sepedonicus (Clavibacter michiganensis subsp. sepedonicus) protein is UvrABC system protein B.